The chain runs to 501 residues: Cytochrome P450 76M5 (501 aa).

A helical transmembrane segment spans residues 5–25; it reads ELWVLAAALAVSLLYYLAALM. C443 contributes to the heme binding site.

This sequence belongs to the cytochrome P450 family. Heme serves as cofactor.

Its subcellular location is the membrane. The enzyme catalyses ent-sandaracopimaradien-3beta-ol + reduced [NADPH--hemoprotein reductase] + O2 = oryzalexin E + oxidized [NADPH--hemoprotein reductase] + H2O + H(+). Its function is as follows. Enzyme of the diterpenoid metabolism involved in the biosynthesis of the oryzalexin class of phytoalexins. Hydroxylates ent-sandaracopimaradien. The chain is Cytochrome P450 76M5 from Oryza sativa subsp. japonica (Rice).